Consider the following 317-residue polypeptide: Low affinity immunoglobulin gamma Fc region receptor II-a (317 aa).

A signal peptide spans 1 to 33 (MTMETQMSQNVCPRNLWLLQPLTVLLLLASADS). At 34 to 217 (QAAAPPKAVL…PSMGSSSPMG (184 aa)) the chain is on the extracellular side. Ig-like C2-type domains follow at residues 39 to 118 (PKAV…VHLT) and 122 to 204 (EWLV…VTIT). 2 disulfides stabilise this stretch: C62–C104 and C143–C187. N-linked (GlcNAc...) asparagine glycosylation is found at N97 and N178. A helical transmembrane segment spans residues 218 to 240 (IIVAVVIATAVAAIVAAVVALIY). Topologically, residues 241 to 317 (CRKKRISANS…PPNDHVNSNN (77 aa)) are cytoplasmic. 2 positions are modified to phosphotyrosine; by SRC-type Tyr-kinases: Y288 and Y304. The tract at residues 292 to 317 (NPRAPTDDDKNIYLTLPPNDHVNSNN) is disordered.

In terms of assembly, interacts with IGHG1. Interacts with INPP5D/SHIP1 and INPPL1/SHIP2, regulating its function. Interacts with APCS and FGR. Interacts with HCK. Phosphorylated by SRC-type Tyr-kinases such as LYN, BLK, FYN, HCK and SYK. In terms of tissue distribution, found on monocytes, neutrophils and eosinophil platelets.

It is found in the cell membrane. Binds to the Fc region of immunoglobulins gamma. Low affinity receptor. By binding to IgG it initiates cellular responses against pathogens and soluble antigens. Promotes phagocytosis of opsonized antigens. In Homo sapiens (Human), this protein is Low affinity immunoglobulin gamma Fc region receptor II-a (FCGR2A).